Reading from the N-terminus, the 305-residue chain is MTKKLALQDIILTLQQFWAKQGCMLMQSYDTEKGAGTMSPYTFLRAIGPEPWNVAYVEPSRRPADGRYGDNPNRLYQHHQFQVLMKPSPSNIQELYLDSLRALGIEPKEHDIRFVEDNWENPSMGCAGVGWEVWLDGMEITQFTYFQQVGGLEVKPVAAEVTYGLERLSSYIQDVDSVYDLEWADGVKYGDIFKEPEYEHSKYSFEESNQEMLLNLFDTFETEAKKQLANGLVHPAYDYILKCSHTFNLLDARGAVSVTERAGYLSRIRNMAKSVAKVFVAERKKLGYPLIKDEKLRQELLKEEK.

The protein belongs to the class-II aminoacyl-tRNA synthetase family. As to quaternary structure, tetramer of two alpha and two beta subunits.

It localises to the cytoplasm. It catalyses the reaction tRNA(Gly) + glycine + ATP = glycyl-tRNA(Gly) + AMP + diphosphate. The sequence is that of Glycine--tRNA ligase alpha subunit from Ligilactobacillus salivarius (strain UCC118) (Lactobacillus salivarius).